The primary structure comprises 133 residues: Interferon alpha-inducible protein 27-like protein 2 (133 aa).

A run of 3 helical transmembrane segments spans residues alanine 8–phenylalanine 28, glycine 51–leucine 71, and threonine 73–alanine 93. The tract at residues alanine 93–lysine 133 is disordered.

The protein belongs to the IFI6/IFI27 family.

The protein resides in the mitochondrion membrane. Functionally, plays a role in the apoptotic process and has a pro-apoptotic activity. This Bos taurus (Bovine) protein is Interferon alpha-inducible protein 27-like protein 2.